The primary structure comprises 135 residues: MQILHTMLRVGDLDRSIKFYQDVLGMRLLRTSENPEYKYTLAFLGYEDGESAAEIELTYNWGVDKYEHGTAYGHIAIGVDDIYATCEAVRASGGNVTREAGPVKGGSTVIAFVEDPDGYKIEFIENKSTKSGLGN.

The 125-residue stretch at 2–126 (QILHTMLRVG…DGYKIEFIEN (125 aa)) folds into the VOC domain. His5 lines the Ni(2+) pocket. Arg9 contributes to the substrate binding site. Glu56 serves as a coordination point for Ni(2+). Substrate-binding residues include Asn60 and His74. 2 residues coordinate Ni(2+): His74 and Glu122. The active-site Proton donor/acceptor is the Glu122.

Belongs to the glyoxalase I family. As to quaternary structure, homodimer. Ni(2+) serves as cofactor.

The catalysed reaction is (R)-S-lactoylglutathione = methylglyoxal + glutathione. It functions in the pathway secondary metabolite metabolism; methylglyoxal degradation; (R)-lactate from methylglyoxal: step 1/2. In terms of biological role, catalyzes the conversion of hemimercaptal, formed from methylglyoxal and glutathione, to S-lactoylglutathione. The protein is Lactoylglutathione lyase (gloA) of Haemophilus influenzae (strain ATCC 51907 / DSM 11121 / KW20 / Rd).